The primary structure comprises 133 residues: MAKEFGRPQRVAQEMQKEIALILQREIKDPRVGMMTTVSGVEMSRDLAYAKVFVTFLNDQDEAAVKNGIKALQEASGFIRSLLGKAMRLRIVPELTFFYDNSLVEGMRMSNLVTNVVKHDEERRVNPDDSKED.

It belongs to the RbfA family. In terms of assembly, monomer. Binds 30S ribosomal subunits, but not 50S ribosomal subunits or 70S ribosomes.

It is found in the cytoplasm. Its function is as follows. One of several proteins that assist in the late maturation steps of the functional core of the 30S ribosomal subunit. Associates with free 30S ribosomal subunits (but not with 30S subunits that are part of 70S ribosomes or polysomes). Required for efficient processing of 16S rRNA. May interact with the 5'-terminal helix region of 16S rRNA. This chain is Ribosome-binding factor A, found in Salmonella typhi.